Reading from the N-terminus, the 222-residue chain is MKNNAQLLMPREKMLKFGISALTDVELLALFLRTGTRGKDVLTLAKEMLENFGSLYGLLTSEYEQFSGVHGIGVAKFAQLKGIAELARRYYNVRMREKSPLLSPEMTREFLQSQLTGEEREIFMVIFLDSQHRVITHSRLFSGTLNHVEVHPREIIREAIKINASALILAHNHPSGCAEPSKADKLITERIIKSCQFMDLRVLDHIVIGRGEYVSFAERGWI.

An MPN domain is found at 100–222 (PLLSPEMTRE…YVSFAERGWI (123 aa)). The Zn(2+) site is built by histidine 171, histidine 173, and aspartate 184. Residues 171-184 (HNHPSGCAEPSKAD) carry the JAMM motif motif.

Belongs to the UPF0758 family. YicR subfamily.

The sequence is that of UPF0758 protein YicR from Escherichia coli O9:H4 (strain HS).